Consider the following 438-residue polypeptide: MTQSREVLNLLTLQTPSPSGGPRPCRRYQLRTPREGCGTVMEMMVAQRDHLRVSHVSPFAVSLQAPDRWERCRHGAPRFRLALGKGEYGRVEAVSKHECVKTFNEVVAFYHELVVCDLIEIARLRSRCPEKSEGLISFVDACMPCKQLFFPRYSCSLNDFSHWGPENIPPLVAGFESLLDAVVFLNEECGLFHSDISPCNILVERAQTETGLGKLVLTDMGLATPHTGNPQTGVSFVSSGGTQLYQMFVDRGPFMVSKDAYKPACVLLRCFRVAAALNWGEVKTDRFPICQQMSRVIDVSCLGYCLLNVIERILDVTKAEPTNRFYSRCSFTELQPQYFLKCLVHKVVLLEFLADLWKVEGGGLSIGVSSGAEFDSERLSLSERQDFRSWCRQLDTRYICTLYPYSNLLEGCEGLRDCLVNLLSLDYFSPFGRKSLES.

Positions 77-340 constitute a Protein kinase domain; sequence PRFRLALGKG…FTELQPQYFL (264 aa).

It belongs to the protein kinase superfamily. Tyr protein kinase family.

The polypeptide is Probable inactive protein kinase 38 (36) (Equus caballus (Horse)).